We begin with the raw amino-acid sequence, 289 residues long: MSKRVILFLLTNLAITFVLGIVLNIIFQVTGIKGTSTTGILMMSLLFGFTGSLISLFMSKSMALRSVGAEVIQQPRNQAEQWLFNTVQRQSQKAGIPMPDIAIYHSADVNAFATGATKNNSLVAVSTGLLDNMTEDEAEAVVAHEIAHIANGDMVTMTLLQGVLNTFVIFLSRMISTAVSGSRDENGNSTQNTLVFWVVDIALQMIFGILATMIAMWFSRYREYRADMGSAQLVGKEKMIAALERLRHVHEPQEMQGSLSAFMINGIRSKELFMSHPPLEKRIEALRNL.

2 consecutive transmembrane segments (helical) span residues 6 to 26 (ILFLLTNLAITFVLGIVLNII) and 38 to 58 (TGILMMSLLFGFTGSLISLFM). H144 serves as a coordination point for Zn(2+). E145 is an active-site residue. H148 provides a ligand contact to Zn(2+). 2 consecutive transmembrane segments (helical) span residues 152–172 (GDMVTMTLLQGVLNTFVIFLS) and 194–214 (LVFWVVDIALQMIFGILATMI). E223 lines the Zn(2+) pocket.

Belongs to the peptidase M48B family. Requires Zn(2+) as cofactor.

Its subcellular location is the cell inner membrane. In Haemophilus ducreyi (strain 35000HP / ATCC 700724), this protein is Protease HtpX.